The following is a 507-amino-acid chain: RNA-splicing ligase RtcB homolog (507 aa).

The Mn(2+) site is built by Asp121, Cys124, His229, His261, and His355. 228–232 provides a ligand contact to GMP; the sequence is NHYGE. Residues 355-356, 404-407, Ser411, 430-433, and Lys506 each bind GMP; these read HN, GGTM, and HGSG. His430 (GMP-histidine intermediate) is an active-site residue.

It belongs to the RtcB family. Catalytic component of the tRNA-splicing ligase complex. The cofactor is Mn(2+).

It carries out the reaction a 3'-end 3'-phospho-ribonucleotide-RNA + a 5'-end dephospho-ribonucleoside-RNA + GTP = a ribonucleotidyl-ribonucleotide-RNA + GMP + diphosphate. It catalyses the reaction a 3'-end 2',3'-cyclophospho-ribonucleotide-RNA + a 5'-end dephospho-ribonucleoside-RNA + GTP + H2O = a ribonucleotidyl-ribonucleotide-RNA + GMP + diphosphate + H(+). Functionally, catalytic subunit of the tRNA-splicing ligase complex that acts by directly joining spliced tRNA halves to mature-sized tRNAs by incorporating the precursor-derived splice junction phosphate into the mature tRNA as a canonical 3',5'-phosphodiester. May act as an RNA ligase with broad substrate specificity, and may function toward other RNAs. This chain is RNA-splicing ligase RtcB homolog, found in Theileria parva (East coast fever infection agent).